A 602-amino-acid chain; its full sequence is UvrABC system protein C (602 aa).

The GIY-YIG domain occupies 15 to 92; the sequence is DLPGSYQMKD…IQKYQPYYNI (78 aa). Residues 197-232 enclose the UVR domain; the sequence is GKAKASLTAKMERAAKNLQFERAAEIRDQLHYIEQT.

Belongs to the UvrC family. In terms of assembly, interacts with UvrB in an incision complex.

The protein resides in the cytoplasm. The UvrABC repair system catalyzes the recognition and processing of DNA lesions. UvrC both incises the 5' and 3' sides of the lesion. The N-terminal half is responsible for the 3' incision and the C-terminal half is responsible for the 5' incision. This Lacticaseibacillus casei (strain BL23) (Lactobacillus casei) protein is UvrABC system protein C.